The sequence spans 555 residues: uncharacterized protein (555 aa).

2 ABC transporter domains span residues 4 to 244 (VKVK…PPYK) and 255 to 547 (IQVR…ARFM). ATP is bound by residues 36–43 (GKSGAGKS) and 292–299 (GPSGVGKT).

It belongs to the ABC transporter superfamily.

This is an uncharacterized protein from Methanocaldococcus jannaschii (strain ATCC 43067 / DSM 2661 / JAL-1 / JCM 10045 / NBRC 100440) (Methanococcus jannaschii).